The chain runs to 325 residues: Elongation factor P--(R)-beta-lysine ligase (325 aa).

Residue 76–78 (SPE) participates in substrate binding. Residues 100–102 (RNE) and asparagine 109 each bind ATP. Residue tyrosine 118 participates in substrate binding. Residue 244–245 (EL) coordinates ATP. Glutamate 251 is a binding site for substrate. Glycine 300 lines the ATP pocket.

It belongs to the class-II aminoacyl-tRNA synthetase family. EpmA subfamily. As to quaternary structure, homodimer.

The enzyme catalyses D-beta-lysine + L-lysyl-[protein] + ATP = N(6)-((3R)-3,6-diaminohexanoyl)-L-lysyl-[protein] + AMP + diphosphate + H(+). With EpmB is involved in the beta-lysylation step of the post-translational modification of translation elongation factor P (EF-P) on 'Lys-34'. Catalyzes the ATP-dependent activation of (R)-beta-lysine produced by EpmB, forming a lysyl-adenylate, from which the beta-lysyl moiety is then transferred to the epsilon-amino group of EF-P 'Lys-34'. The chain is Elongation factor P--(R)-beta-lysine ligase from Salmonella paratyphi A (strain ATCC 9150 / SARB42).